The chain runs to 250 residues: 3-deoxy-manno-octulosonate cytidylyltransferase (250 aa).

The protein belongs to the KdsB family.

The protein localises to the cytoplasm. The catalysed reaction is 3-deoxy-alpha-D-manno-oct-2-ulosonate + CTP = CMP-3-deoxy-beta-D-manno-octulosonate + diphosphate. It functions in the pathway nucleotide-sugar biosynthesis; CMP-3-deoxy-D-manno-octulosonate biosynthesis; CMP-3-deoxy-D-manno-octulosonate from 3-deoxy-D-manno-octulosonate and CTP: step 1/1. It participates in bacterial outer membrane biogenesis; lipopolysaccharide biosynthesis. In terms of biological role, activates KDO (a required 8-carbon sugar) for incorporation into bacterial lipopolysaccharide in Gram-negative bacteria. This is 3-deoxy-manno-octulosonate cytidylyltransferase from Actinobacillus pleuropneumoniae serotype 7 (strain AP76).